Reading from the N-terminus, the 199-residue chain is Phycocyanobilin lyase CpcT (199 aa).

Belongs to the CpcT/CpeT biliprotein lyase family.

In terms of biological role, catalyzes the site-selective attachment of phycocyanobilin (PCB) to 'Cys-154' of C-phycocyanin subunit beta (CpcB) and to 'Cys-153' of phycoerythrocyanin subunit beta (PecB). Does not have chromophore lyase activity for ApcA1, ApcA2, ApcB, ApcD, ApcF or PecA. This is Phycocyanobilin lyase CpcT (cpcT1) from Nostoc sp. (strain PCC 7120 / SAG 25.82 / UTEX 2576).